A 1872-amino-acid chain; its full sequence is Plexin-A3 (1872 aa).

A signal peptide spans 1-19 (MHTVCLLPLLFFTIGGCLG). Residues 20-489 (SSRPFRTFVV…SEKQVSQLPV (470 aa)) enclose the Sema domain. Residues 20–1220 (SSRPFRTFVV…ITADRALTLP (1201 aa)) are Extracellular-facing. Asn60 carries an N-linked (GlcNAc...) asparagine glycan. Intrachain disulfides connect Cys78–Cys87, Cys113–Cys121, Cys267–Cys388, Cys283–Cys339, Cys357–Cys376, Cys492–Cys509, Cys498–Cys540, Cys501–Cys518, and Cys512–Cys524. An N-linked (GlcNAc...) asparagine glycan is attached at Asn549. A disulfide bridge connects residues Cys575 and Cys595. 4 consecutive IPT/TIG domains span residues 841–934 (PRIT…YSFV), 936–1021 (PTLD…YTYT), 1024–1123 (PTVT…FTYY), and 1126–1212 (PSFE…LHIT). The N-linked (GlcNAc...) asparagine glycan is linked to Asn1163. A helical membrane pass occupies residues 1221–1241 (AMVGLAAGGGLLLLAITVVLV). Positions 1240–1294 (LVAYKRKTQDADRTLKRLQLQMDNLESRVALECKEAFAELQTDINELTNHMDGVQ) form a coiled coil. Residues 1242 to 1872 (AYKRKTQDAD…QIITLVSSSS (631 aa)) are Cytoplasmic-facing. Ser1597 is subject to Phosphoserine.

It belongs to the plexin family.

It is found in the cell membrane. Its function is as follows. Coreceptor for SEMA3A and SEMA3F. Necessary for signaling by class 3 semaphorins and subsequent remodeling of the cytoskeleton. Plays a role in axon guidance in the developing nervous system. Regulates the migration of sympathetic neurons, but not of neural crest precursors. Required for normal dendrite spine morphology in pyramidal neurons. May play a role in regulating semaphorin-mediated programmed cell death in the developing nervous system. Class 3 semaphorins bind to a complex composed of a neuropilin and a plexin. The plexin modulates the affinity of the complex for specific semaphorins, and its cytoplasmic domain is required for the activation of down-stream signaling events in the cytoplasm. The sequence is that of Plexin-A3 (Plxna3) from Rattus norvegicus (Rat).